A 416-amino-acid polypeptide reads, in one-letter code: Gamma-glutamyl phosphate reductase (416 aa).

Belongs to the gamma-glutamyl phosphate reductase family.

It is found in the cytoplasm. It carries out the reaction L-glutamate 5-semialdehyde + phosphate + NADP(+) = L-glutamyl 5-phosphate + NADPH + H(+). It functions in the pathway amino-acid biosynthesis; L-proline biosynthesis; L-glutamate 5-semialdehyde from L-glutamate: step 2/2. Functionally, catalyzes the NADPH-dependent reduction of L-glutamate 5-phosphate into L-glutamate 5-semialdehyde and phosphate. The product spontaneously undergoes cyclization to form 1-pyrroline-5-carboxylate. In Leptospira interrogans serogroup Icterohaemorrhagiae serovar Lai (strain 56601), this protein is Gamma-glutamyl phosphate reductase.